We begin with the raw amino-acid sequence, 766 residues long: Pentatricopeptide repeat-containing protein At5g28460 (766 aa).

16 PPR repeats span residues 151–181, 184–218, 221–257, 258–292, 293–327, 328–358, 369–404, 405–439, 440–474, 475–509, 510–544, 545–579, 580–614, 615–650, 651–685, and 686–720; these read TIVA…LDSN, NSQV…ESVF, NRIT…GVSP, NSVW…KTPL, EAPP…KIRP, DVVT…MRGK, DSIH…RCVP, NAVT…EIKP, NVVT…GVKG, NVVT…GCSP, DAKI…GFSL, DLLA…GKKP, DSIT…GLDP, TVTT…KVNP, NTVI…MVRP, and NVET…SCEP.

The protein belongs to the PPR family. P subfamily.

The sequence is that of Pentatricopeptide repeat-containing protein At5g28460 from Arabidopsis thaliana (Mouse-ear cress).